Here is a 1318-residue protein sequence, read N- to C-terminus: Maestro heat-like repeat family member 5 (1318 aa).

Positions 1–38 are disordered; sequence MDRQCSERPYSCTPTGRVSSAVSQNSRISPPVSTSMKD. Residues 12–38 are compositionally biased toward polar residues; the sequence is CTPTGRVSSAVSQNSRISPPVSTSMKD. An HEAT 1 repeat occupies 581-618; that stretch reads DELHFLLSHLYIWLASEKAHERQRAVHSCMILLKFLNH. The segment at 676–695 is disordered; the sequence is ESQAPKELSQAHSDGAPLWN. 8 HEAT repeats span residues 769-811, 840-880, 996-1033, 1037-1074, 1076-1113, 1118-1155, 1164-1200, and 1278-1315; these read GAKL…SHTC, PTSH…LLAA, RQIPAVLRQLLPSLQSPQERERKVAILILTKFLYSPVL, LPKQAALTVLAQGLHDPSPEVRVLSLQGLSNILFHPDK, SLLQGQLRPLLDGFFQSSDQVIVCIMGTVSDTLHRLGA, SQSLGVAISTRSFFNDERDGIRAAAMALFGDLVAAMAD, QVHQSMVPLLLHLKDQCPAVATQAKFTFYRCAVLLRW, and VDTNLLFRTFEHLRSDPEPSIREFATSQLSFLQKVSAR.

The chain is Maestro heat-like repeat family member 5 (MROH5) from Homo sapiens (Human).